Reading from the N-terminus, the 224-residue chain is Thiamine-phosphate synthase (224 aa).

4-amino-2-methyl-5-(diphosphooxymethyl)pyrimidine is bound by residues 44–48 (QFREK) and asparagine 79. Positions 80 and 99 each coordinate Mg(2+). Serine 117 contacts 4-amino-2-methyl-5-(diphosphooxymethyl)pyrimidine. 143-145 (TET) contributes to the 2-[(2R,5Z)-2-carboxy-4-methylthiazol-5(2H)-ylidene]ethyl phosphate binding site. Lysine 146 is a 4-amino-2-methyl-5-(diphosphooxymethyl)pyrimidine binding site. Residues glycine 175 and 195-196 (IS) each bind 2-[(2R,5Z)-2-carboxy-4-methylthiazol-5(2H)-ylidene]ethyl phosphate.

It belongs to the thiamine-phosphate synthase family. It depends on Mg(2+) as a cofactor.

The enzyme catalyses 2-[(2R,5Z)-2-carboxy-4-methylthiazol-5(2H)-ylidene]ethyl phosphate + 4-amino-2-methyl-5-(diphosphooxymethyl)pyrimidine + 2 H(+) = thiamine phosphate + CO2 + diphosphate. The catalysed reaction is 2-(2-carboxy-4-methylthiazol-5-yl)ethyl phosphate + 4-amino-2-methyl-5-(diphosphooxymethyl)pyrimidine + 2 H(+) = thiamine phosphate + CO2 + diphosphate. It catalyses the reaction 4-methyl-5-(2-phosphooxyethyl)-thiazole + 4-amino-2-methyl-5-(diphosphooxymethyl)pyrimidine + H(+) = thiamine phosphate + diphosphate. The protein operates within cofactor biosynthesis; thiamine diphosphate biosynthesis; thiamine phosphate from 4-amino-2-methyl-5-diphosphomethylpyrimidine and 4-methyl-5-(2-phosphoethyl)-thiazole: step 1/1. Functionally, condenses 4-methyl-5-(beta-hydroxyethyl)thiazole monophosphate (THZ-P) and 2-methyl-4-amino-5-hydroxymethyl pyrimidine pyrophosphate (HMP-PP) to form thiamine monophosphate (TMP). This Bacillus velezensis (strain DSM 23117 / BGSC 10A6 / LMG 26770 / FZB42) (Bacillus amyloliquefaciens subsp. plantarum) protein is Thiamine-phosphate synthase.